A 127-amino-acid polypeptide reads, in one-letter code: Putative defensin-like protein 180 (127 aa).

A signal peptide spans 1–26 (MERITSLVFFASFLIIFVSGVNQTRA). Cystine bridges form between Cys-29–Cys-70, Cys-36–Cys-55, Cys-39–Cys-64, Cys-43–Cys-66, Cys-81–Cys-127, Cys-92–Cys-112, Cys-97–Cys-121, and Cys-101–Cys-123.

It belongs to the DEFL family.

It is found in the secreted. The protein is Putative defensin-like protein 180 (LCR58) of Arabidopsis thaliana (Mouse-ear cress).